We begin with the raw amino-acid sequence, 201 residues long: MAKRVTGPEIEKLIQLLAKVPGLGPRSARRAALHLVKKKEQLLGPLAEAMGEAHRKVKICSCCGNVDTIDPCTVCTDERRDQAVIIVVEDVADLWALERAGAMNAAYHVLGGTLSPLDGIGPEDLNIRGLIDRVAKGGVRELIIAVNATVEGQTTAHYITDQLEGMEVRITRLAHGVPVGGELDYLDEGTLAAALRARTVI.

A C4-type zinc finger spans residues 60 to 75; the sequence is CSCCGNVDTIDPCTVC. Residues 83 to 178 enclose the Toprim domain; the sequence is AVIIVVEDVA…RITRLAHGVP (96 aa).

This sequence belongs to the RecR family.

In terms of biological role, may play a role in DNA repair. It seems to be involved in an RecBC-independent recombinational process of DNA repair. It may act with RecF and RecO. This chain is Recombination protein RecR, found in Rhizobium meliloti (strain 1021) (Ensifer meliloti).